The primary structure comprises 167 residues: NADH-ubiquinone oxidoreductase chain 4 (167 aa).

3 helical membrane-spanning segments follow: residues 2 to 22 (FIGA…LFCL), 44 to 64 (LLPL…ALPP), and 86 to 106 (IILV…MLIM).

It belongs to the complex I subunit 4 family.

The protein resides in the mitochondrion membrane. It carries out the reaction a ubiquinone + NADH + 5 H(+)(in) = a ubiquinol + NAD(+) + 4 H(+)(out). Core subunit of the mitochondrial membrane respiratory chain NADH dehydrogenase (Complex I) that is believed to belong to the minimal assembly required for catalysis. Complex I functions in the transfer of electrons from NADH to the respiratory chain. The immediate electron acceptor for the enzyme is believed to be ubiquinone. The polypeptide is NADH-ubiquinone oxidoreductase chain 4 (MT-ND4) (Carlito syrichta (Philippine tarsier)).